A 232-amino-acid chain; its full sequence is MPKHSKRYNEVRKLVDRTKEYDLNEAVDLAKKVATAKFDETVELHIKTNIDYRKSDQQIRSTISLPHGTGKEVRVLVFAKGEKAEEAKKAGADYVGAEDLAEKIQKEGFLDFDVAIATPDMMKIIGRLGKILGPRGLMPNPKAGTVTNDVAAAVKDFKKGRMEIRTDKTGNLHIPVGKASFEKEKLTENIKSAYEQVLNLKPTGVKGTFIKKVVLSTTMGPGIKVNPATLTQ.

This sequence belongs to the universal ribosomal protein uL1 family. In terms of assembly, part of the 50S ribosomal subunit.

In terms of biological role, binds directly to 23S rRNA. The L1 stalk is quite mobile in the ribosome, and is involved in E site tRNA release. Functionally, protein L1 is also a translational repressor protein, it controls the translation of the L11 operon by binding to its mRNA. This chain is Large ribosomal subunit protein uL1, found in Thermosipho melanesiensis (strain DSM 12029 / CIP 104789 / BI429).